Consider the following 103-residue polypeptide: Large ribosomal subunit protein bL21 (103 aa).

Belongs to the bacterial ribosomal protein bL21 family. In terms of assembly, part of the 50S ribosomal subunit. Contacts protein L20.

In terms of biological role, this protein binds to 23S rRNA in the presence of protein L20. In Glaesserella parasuis serovar 5 (strain SH0165) (Haemophilus parasuis), this protein is Large ribosomal subunit protein bL21.